We begin with the raw amino-acid sequence, 340 residues long: uncharacterized protein (340 aa).

The span at 193–207 (KELPKEKKKSDGDKT) shows a compositional bias: basic and acidic residues. The interval 193–340 (KELPKEKKKS…FIPLQPKKKI (148 aa)) is disordered. Over residues 217–228 (FFGFWGHSGSKS) the composition is skewed to low complexity. The segment covering 235–244 (EKPIEAKNEI) has biased composition (basic and acidic residues). Composition is skewed to polar residues over residues 263–279 (SDKN…SDQQ) and 307–328 (PAQS…SLTL).

This is an uncharacterized protein from Saccharomyces cerevisiae (strain ATCC 204508 / S288c) (Baker's yeast).